The primary structure comprises 64 residues: Bactridin-2 (64 aa).

In terms of domain architecture, LCN-type CS-alpha/beta spans 1-63 (KDGYLVGNDG…TWNRATNRCG (63 aa)). 4 cysteine pairs are disulfide-bonded: Cys-11-Cys-62, Cys-15-Cys-37, Cys-23-Cys-43, and Cys-27-Cys-45.

Belongs to the long (4 C-C) scorpion toxin superfamily. Sodium channel inhibitor family. Beta subfamily. In terms of tissue distribution, expressed by the venom gland.

The protein resides in the secreted. In terms of biological role, shows antibacterial activity against both Gram-positive bacteria (B.subtilis, M.luteus, E.faecalis) and Gram-negative bacteria (P.aeruginosa, Y.enterocolitica, A.calcoaceticus). Modifies membrane sodium permeability on Y.enterocolitica. Is toxic to mice, but is not to crabs. Induces concentration dependent haemolysis in human erythrocytes. Acts by inhibiting the sodium (Nav) currents. This is Bactridin-2 from Tityus discrepans (Venezuelan scorpion).